The following is a 1791-amino-acid chain: Protein TIC 214 (1791 aa).

6 helical membrane-spanning segments follow: residues 19 to 39, 68 to 88, 91 to 111, 133 to 153, 176 to 196, and 230 to 250; these read IINSVVVVGLYYGFLTTFSIG, FIAGQLMMFISIYYAPLHLAL, PHTITVLALPYLLFHFFWNNH, VFLNNLIFQLFNHFILPSSML, VGWLIGHILFMKWVGLVLVWI, and IFSILLFITCVYYLGRIPSPI. Residues 257–271 are compositionally biased toward basic and acidic residues; it reads GTSETEERGGTKQDQ. Disordered stretches follow at residues 257-278 and 1498-1521; these read GTSETEERGGTKQDQEVSTEEA and ADQGELESDNEKQRNPELALPNQE.

It belongs to the TIC214 family. Part of the Tic complex.

It localises to the plastid. The protein localises to the chloroplast inner membrane. In terms of biological role, involved in protein precursor import into chloroplasts. May be part of an intermediate translocation complex acting as a protein-conducting channel at the inner envelope. The protein is Protein TIC 214 of Aethionema grandiflorum (Persian stone-cress).